The primary structure comprises 782 residues: Nezukol synthase KSL3 (782 aa).

Residues D529, D533, N677, and E685 each coordinate Mg(2+). The DDXXD motif motif lies at 529 to 533 (DDVFD).

Belongs to the terpene synthase family. Mg(2+) is required as a cofactor. Highly expressed in leaves, and, at low levels, in stems, but barely in roots and flowers.

The enzyme catalyses (+)-copalyl diphosphate = miltiradiene + diphosphate. It catalyses the reaction (+)-copalyl diphosphate + H2O = nezukol + diphosphate. Its pathway is secondary metabolite biosynthesis; terpenoid biosynthesis. In terms of biological role, involved in the biosynthesis of ent-kaurene diterpenoids natural products such as oridonin, miltiradiene, eriocalyxin B and nezukol, known to exhibit antitumor, anti-inflammatory and antibacterial activities. Catalyzes the conversion of (+)-copalyl diphosphate ((+)-CPP) to nezukol and miltiradiene. The reaction mechanism proceeds via the ionization of the diphosphate group of (+)-CPP, followed by formation of an intermediary pimar-15-en-8-yl(+) carbocation and neutralization of the carbocation by water capture at C-8 to yield nezukol. Can interact with ent-copalyl diphosphate (ent-CPP) but seems unable to use it as substrate. The polypeptide is Nezukol synthase KSL3 (Isodon rubescens (Rabdosia rubescens)).